The sequence spans 470 residues: Putative multidrug resistance protein MdtD (470 aa).

The Periplasmic portion of the chain corresponds to 1-11; sequence MTELPDNTRWQ. Residues 12–32 form a helical membrane-spanning segment; sequence LWIVALGFFMQSLDTTIVNTA. Topologically, residues 33-48 are cytoplasmic; sequence LPSMAKSLGESPLHMH. Residues 49 to 69 form a helical membrane-spanning segment; sequence MVVVSYVLTVAVMLPASGWLA. Residues 70–76 lie on the Periplasmic side of the membrane; the sequence is DKIGVRN. A helical membrane pass occupies residues 77 to 97; sequence IFFAAIVLFTLGSLFCALSGT. At 98-101 the chain is on the cytoplasmic side; that stretch reads LNQL. A helical membrane pass occupies residues 102-124; that stretch reads VLARVLQGVGGAMMVPVGRLTVM. At 125 to 137 the chain is on the periplasmic side; it reads KIVPRAQYMAAMT. A helical transmembrane segment spans residues 138–158; it reads FVTLPGQIGPLLGPALGGVLV. Topologically, residues 159–164 are cytoplasmic; that stretch reads EYASWH. Residues 165–185 form a helical membrane-spanning segment; that stretch reads WIFLINIPVGIVGAMATFMLM. The Periplasmic portion of the chain corresponds to 186-196; sequence PNYTIETRRFD. The helical transmembrane segment at 197-217 threads the bilayer; that stretch reads LPGFLLLAIGMAVLTLALDGS. Residues 218–221 are Cytoplasmic-facing; it reads KSMG. A helical transmembrane segment spans residues 222–242; the sequence is ISPWTLAGLAAGGAAAILLYL. The Periplasmic segment spans residues 243–262; the sequence is LHAKKNSGALFSLRLFRTPT. The chain crosses the membrane as a helical span at residues 263 to 283; the sequence is FSLGLLGSFAGRIGSGMLPFM. The Cytoplasmic segment spans residues 284–285; sequence TP. The chain crosses the membrane as a helical span at residues 286–306; that stretch reads VFLQIGLGFSPFHAGLMMIPM. Residues 307–341 are Periplasmic-facing; sequence VLGSMGMKRIVVQIVNRFGYRRVLVATTLGLALVS. Residues 342–362 form a helical membrane-spanning segment; sequence LLFMSVALLGWYYLLPLVLLL. Topologically, residues 363–395 are cytoplasmic; it reads QGMVNSARFSSMNTLTLKDLPDTLASSGNSLLS. Residues 396–416 form a helical membrane-spanning segment; it reads MIMQLSMSIGVTIAGMLLGMF. Residues 417 to 430 lie on the Periplasmic side of the membrane; it reads GQQHIGIDSSATHH. A helical transmembrane segment spans residues 431-451; the sequence is VFMYTWLCMAVIIALPAIIFA. The Cytoplasmic segment spans residues 452 to 470; it reads RVPNDTQQNMVISRRKRSL.

Belongs to the major facilitator superfamily. TCR/Tet family.

It localises to the cell inner membrane. The protein is Putative multidrug resistance protein MdtD of Salmonella heidelberg (strain SL476).